Reading from the N-terminus, the 156-residue chain is C-type lectin lectoxin-Lei1 (156 aa).

Residues 1–23 (MRRFLFLSLGVLVVAFSLNGIGA) form the signal peptide. 3 cysteine pairs are disulfide-bonded: C27–C38, C55–C154, and C129–C146. One can recognise a C-type lectin domain in the interval 34-155 (FDRFCYKVIK…CESRNIFICK (122 aa)). 2 N-linked (GlcNAc...) asparagine glycosylation sites follow: N60 and N99. The short motif at 119-121 (KRN) is the Sugar-binding element. N142 serves as a coordination point for Ca(2+).

The protein belongs to the true venom lectin family. In terms of tissue distribution, expressed by the venom gland.

Its subcellular location is the secreted. In terms of biological role, lectin which recognizes specific carbohydrate structures and agglutinates a variety of animal cells by binding to cell-surface glycoproteins and glycolipids. May be a calcium-dependent lectin. The polypeptide is C-type lectin lectoxin-Lei1 (Leioheterodon madagascariensis (Malagasy giant hognose snake)).